A 631-amino-acid chain; its full sequence is Beta-galactosidase-1-like protein 3 (631 aa).

E203 acts as the Proton donor in catalysis. E277 acts as the Nucleophile in catalysis.

The protein belongs to the glycosyl hydrolase 35 family.

The polypeptide is Beta-galactosidase-1-like protein 3 (Glb1l3) (Rattus norvegicus (Rat)).